A 456-amino-acid chain; its full sequence is tRNA modification GTPase MnmE (456 aa).

(6S)-5-formyl-5,6,7,8-tetrahydrofolate-binding residues include R24, E81, and K120. The TrmE-type G domain maps to G216–G379. N226 is a binding site for K(+). GTP contacts are provided by residues N226–S231, T245–T251, D270–G273, N335–D338, and S359–R361. S230 lines the Mg(2+) pocket. K(+)-binding residues include T245, I247, and T250. T251 provides a ligand contact to Mg(2+). Residue K456 participates in (6S)-5-formyl-5,6,7,8-tetrahydrofolate binding.

This sequence belongs to the TRAFAC class TrmE-Era-EngA-EngB-Septin-like GTPase superfamily. TrmE GTPase family. In terms of assembly, homodimer. Heterotetramer of two MnmE and two MnmG subunits. The cofactor is K(+).

It localises to the cytoplasm. In terms of biological role, exhibits a very high intrinsic GTPase hydrolysis rate. Involved in the addition of a carboxymethylaminomethyl (cmnm) group at the wobble position (U34) of certain tRNAs, forming tRNA-cmnm(5)s(2)U34. The sequence is that of tRNA modification GTPase MnmE from Pseudomonas syringae pv. syringae (strain B728a).